The following is a 231-amino-acid chain: 7-cyano-7-deazaguanine synthase (231 aa).

8–18 contacts ATP; that stretch reads FSGGQDSTTCL. Residues Cys188, Cys197, Cys200, and Cys203 each contribute to the Zn(2+) site.

Belongs to the QueC family. It depends on Zn(2+) as a cofactor.

The enzyme catalyses 7-carboxy-7-deazaguanine + NH4(+) + ATP = 7-cyano-7-deazaguanine + ADP + phosphate + H2O + H(+). It functions in the pathway purine metabolism; 7-cyano-7-deazaguanine biosynthesis. In terms of biological role, catalyzes the ATP-dependent conversion of 7-carboxy-7-deazaguanine (CDG) to 7-cyano-7-deazaguanine (preQ(0)). This chain is 7-cyano-7-deazaguanine synthase, found in Escherichia fergusonii (strain ATCC 35469 / DSM 13698 / CCUG 18766 / IAM 14443 / JCM 21226 / LMG 7866 / NBRC 102419 / NCTC 12128 / CDC 0568-73).